The following is a 614-amino-acid chain: UvrABC system protein C (614 aa).

The GIY-YIG domain occupies Glu-12 to Leu-91. A UVR domain is found at Arg-201 to Thr-236.

It belongs to the UvrC family. In terms of assembly, interacts with UvrB in an incision complex.

The protein localises to the cytoplasm. Its function is as follows. The UvrABC repair system catalyzes the recognition and processing of DNA lesions. UvrC both incises the 5' and 3' sides of the lesion. The N-terminal half is responsible for the 3' incision and the C-terminal half is responsible for the 5' incision. This chain is UvrABC system protein C, found in Geobacter metallireducens (strain ATCC 53774 / DSM 7210 / GS-15).